Reading from the N-terminus, the 260-residue chain is DNA repair protein RecO (260 aa).

This sequence belongs to the RecO family.

Functionally, involved in DNA repair and RecF pathway recombination. This Paracidovorax citrulli (strain AAC00-1) (Acidovorax citrulli) protein is DNA repair protein RecO.